Consider the following 71-residue polypeptide: Conotoxin De13.1 (71 aa).

The signal sequence occupies residues 1 to 19; sequence MSGMGVLLLVLLLVMPLAA. Positions 20 to 35 are excised as a propeptide; it reads FHQDGEGEATRRSGGL. P40 and P44 each carry 4-hydroxyproline. W51 carries the 6'-bromotryptophan modification. E52 is subject to 4-carboxyglutamate. K55 bears the 5-hydroxylysine mark. P58 bears the 4-hydroxyproline mark. The residue at position 69 (H69) is a Histidine amide.

This sequence belongs to the conotoxin G superfamily. Post-translationally, contains 4 disulfide bonds. Expressed by the venom duct.

Its subcellular location is the secreted. The chain is Conotoxin De13.1 from Conasprella delessertii (Sozon's cone).